The chain runs to 94 residues: Acylphosphatase (94 aa).

The region spanning Arg-6 to Pro-92 is the Acylphosphatase-like domain. Catalysis depends on residues Arg-21 and Asn-39.

It belongs to the acylphosphatase family.

The catalysed reaction is an acyl phosphate + H2O = a carboxylate + phosphate + H(+). This chain is Acylphosphatase (acyP), found in Synechococcus sp. (strain JA-2-3B'a(2-13)) (Cyanobacteria bacterium Yellowstone B-Prime).